Here is a 454-residue protein sequence, read N- to C-terminus: Protein disulfide-isomerase TMX3 (454 aa).

Residues 1–24 (MAAWKSWTALRLCATVVVLDMVVC) form the signal peptide. The region spanning 25–128 (KGFVEDLDES…KDDIIEFAHR (104 aa)) is the Thioredoxin domain. Residues 25 to 375 (KGFVEDLDES…TIVSIFKSSP (351 aa)) lie on the Lumenal side of the membrane. Residues Cys53 and Cys56 each act as nucleophile in the active site. Residues Cys53 and Cys56 are joined by a disulfide bond. 2 N-linked (GlcNAc...) asparagine glycosylation sites follow: Asn258 and Asn313. The helical transmembrane segment at 376 to 396 (LMGCFLFGLPLGVISIMCYGI) threads the bilayer. Residues 397 to 454 (YTADTDGGYIEERYEVSKSENENQEQIEESKEQQEPSSGGSVVPTVQEPKDVLEKKKD) are Cytoplasmic-facing. Residues 412–454 (VSKSENENQEQIEESKEQQEPSSGGSVVPTVQEPKDVLEKKKD) form a disordered region. Residues 444-454 (EPKDVLEKKKD) show a composition bias toward basic and acidic residues. The Di-lysine motif motif lies at 451–454 (KKKD).

Belongs to the protein disulfide isomerase family. In terms of processing, N-glycosylated. As to expression, widely expressed. Expressed in brain, testis, lung, skin, kidney, uterus, bone, stomach, liver, prostate, placenta, eye and muscle.

The protein localises to the endoplasmic reticulum membrane. It carries out the reaction Catalyzes the rearrangement of -S-S- bonds in proteins.. Its function is as follows. Probable disulfide isomerase, which participates in the folding of proteins containing disulfide bonds. May act as a dithiol oxidase. Acts as a regulator of endoplasmic reticulum-mitochondria contact sites via its ability to regulate redox signals. The sequence is that of Protein disulfide-isomerase TMX3 (TMX3) from Homo sapiens (Human).